We begin with the raw amino-acid sequence, 154 residues long: Myoglobin (154 aa).

The 147-residue stretch at 2–148 (GLSDGEWQLV…FRNDIAAKYK (147 aa)) folds into the Globin domain. Phosphoserine is present on serine 4. Residue histidine 65 coordinates nitrite. Residue histidine 65 participates in O2 binding. The residue at position 68 (threonine 68) is a Phosphothreonine. Position 94 (histidine 94) interacts with heme b.

This sequence belongs to the globin family. In terms of assembly, monomeric.

It is found in the cytoplasm. The protein localises to the sarcoplasm. The catalysed reaction is Fe(III)-heme b-[protein] + nitric oxide + H2O = Fe(II)-heme b-[protein] + nitrite + 2 H(+). It catalyses the reaction H2O2 + AH2 = A + 2 H2O. Functionally, monomeric heme protein which primary function is to store oxygen and facilitate its diffusion within muscle tissues. Reversibly binds oxygen through a pentacoordinated heme iron and enables its timely and efficient release as needed during periods of heightened demand. Depending on the oxidative conditions of tissues and cells, and in addition to its ability to bind oxygen, it also has a nitrite reductase activity whereby it regulates the production of bioactive nitric oxide. Under stress conditions, like hypoxia and anoxia, it also protects cells against reactive oxygen species thanks to its pseudoperoxidase activity. This is Myoglobin (MB) from Lepilemur mustelinus (Weasel sportive lemur).